A 361-amino-acid polypeptide reads, in one-letter code: SUN domain-containing protein 3 (361 aa).

The Nuclear portion of the chain corresponds to 1-47 (MSGKAKARRAAMFFRGCSEDASGSTSGSTLLSEDENPDTNGVTRSWK). The segment at 19 to 38 (EDASGSTSGSTLLSEDENPD) is disordered. A compositionally biased stretch (low complexity) spans 22–31 (SGSTSGSTLL). The chain crosses the membrane as a helical span at residues 48-69 (IILSTMFTLTFLLVGLLSHQWL). At 70–361 (KETEVPQKSR…RVHGTPGKHI (292 aa)) the chain is on the perinuclear space side. A coiled-coil region spans residues 103-129 (KEQLELLKKESQTLENNFHKILLLIEQ). In terms of domain architecture, SUN spans 197 to 358 (GASIIEAGTS…YRFRVHGTPG (162 aa)).

As to quaternary structure, self-associates. Interacts with SYNE1 and SPAG4/SUN4. Proposed to form a spermatogenesis-specific LINC complex with SYNE1 during sperm head formation possibly implicating a SUN domain-based heterotrimer with SPAG4/SUN4 associating with SYNE1.

The protein resides in the membrane. It is found in the nucleus envelope. Its subcellular location is the nucleus inner membrane. Functionally, as a probable component of the LINC (LInker of Nucleoskeleton and Cytoskeleton) complex, involved in the connection between the nuclear lamina and the cytoskeleton. The nucleocytoplasmic interactions established by the LINC complex play an important role in the transmission of mechanical forces across the nuclear envelope and in nuclear movement and positioning. May be involved in nuclear remodeling during sperm head formation in spermatogenesis. A probable SUN3:SYNE1 LINC complex may tether spermatid nuclei to posterior cytoskeletal structures such as the manchette. In Macaca fascicularis (Crab-eating macaque), this protein is SUN domain-containing protein 3 (SUN3).